Consider the following 499-residue polypeptide: Pentatricopeptide repeat-containing protein At5g61800 (499 aa).

PPR repeat units lie at residues 78–113, 114–150, 151–181, 182–212, 213–247, 248–282, 283–313, 314–348, 349–379, and 385–419; these read STFC…SVPP, DFHT…GLLS, DLFT…NPQR, DVVT…MPLR, DLVS…GLKP, DNVA…RLFI, DSFL…CSDK, TLFT…GIKP, DGVT…MRSL, and EMKH…GGNR. The type E motif stretch occupies residues 424 to 499; the sequence is AWSGLLGGCR…KNVGFSKVLS (76 aa).

It belongs to the PPR family. PCMP-E subfamily.

The chain is Pentatricopeptide repeat-containing protein At5g61800 (PCMP-E8) from Arabidopsis thaliana (Mouse-ear cress).